The chain runs to 159 residues: uncharacterized protein (159 aa).

A divalent metal cation contacts are provided by H44, H124, and H128.

This sequence belongs to the DinB family.

This is an uncharacterized protein from Bacillus subtilis (strain 168).